The sequence spans 483 residues: Trehalose-6-phosphate synthase (483 aa).

Arg22 serves as a coordination point for D-glucose 6-phosphate. UDP-alpha-D-glucose is bound at residue 42-43 (GG). D-glucose 6-phosphate contacts are provided by Tyr94 and Asp148. Residues Arg290 and Lys295 each coordinate UDP-alpha-D-glucose. A D-glucose 6-phosphate-binding site is contributed by Arg328. Residue 393–397 (LVAKE) coordinates UDP-alpha-D-glucose.

The protein belongs to the glycosyltransferase 20 family. In terms of assembly, homotetramer.

It carries out the reaction ADP-alpha-D-glucose + D-glucose 6-phosphate = alpha,alpha-trehalose 6-phosphate + ADP + H(+). The catalysed reaction is CDP-alpha-D-glucose + D-glucose 6-phosphate = alpha,alpha-trehalose 6-phosphate + CDP + H(+). It catalyses the reaction GDP-alpha-D-glucose + D-glucose 6-phosphate = alpha,alpha-trehalose 6-phosphate + GDP + H(+). The enzyme catalyses TDP-alpha-D-glucose + D-glucose 6-phosphate = 5-methyl-UDP + alpha,alpha-trehalose 6-phosphate + H(+). It carries out the reaction D-glucose 6-phosphate + UDP-alpha-D-glucose = alpha,alpha-trehalose 6-phosphate + UDP + H(+). Its pathway is glycan biosynthesis; trehalose biosynthesis. Functionally, probably involved in the osmoprotection via the biosynthesis of trehalose and in the production of glycogen and alpha-glucan via the TreS-Pep2 branch involved in the biosynthesis of maltose-1-phosphate (M1P). Catalyzes the transfer of glucose from UDP-glucose (UDP-Glc) to D-glucose 6-phosphate (Glc-6-P) to form trehalose-6-phosphate. Probably also able to use ADP-Glc, CDP-Glc, GDP-Glc and TDP-Glc as glucosyl donors. In Mycobacterium sp. (strain JLS), this protein is Trehalose-6-phosphate synthase.